Consider the following 719-residue polypeptide: Fatty acid oxidation complex subunit alpha (719 aa).

The tract at residues 1 to 190 (MVYQGNRITV…KLGLVDATVA (190 aa)) is enoyl-CoA hydratase/isomerase. A substrate-binding site is contributed by Asp298. The 3-hydroxyacyl-CoA dehydrogenase stretch occupies residues 313 to 719 (HEINEAAVLG…AAGETFYATA (407 aa)). NAD(+)-binding positions include Met326, Asp345, 402–404 (VVE), Lys409, and Ser431. The active-site For 3-hydroxyacyl-CoA dehydrogenase activity is the His452. Asn455 lines the NAD(+) pocket. Asn502 serves as a coordination point for substrate.

It in the N-terminal section; belongs to the enoyl-CoA hydratase/isomerase family. In the C-terminal section; belongs to the 3-hydroxyacyl-CoA dehydrogenase family. In terms of assembly, heterotetramer of two alpha chains (FadB) and two beta chains (FadA).

It carries out the reaction a (3S)-3-hydroxyacyl-CoA + NAD(+) = a 3-oxoacyl-CoA + NADH + H(+). The enzyme catalyses a (3S)-3-hydroxyacyl-CoA = a (2E)-enoyl-CoA + H2O. It catalyses the reaction a 4-saturated-(3S)-3-hydroxyacyl-CoA = a (3E)-enoyl-CoA + H2O. The catalysed reaction is (3S)-3-hydroxybutanoyl-CoA = (3R)-3-hydroxybutanoyl-CoA. It carries out the reaction a (3Z)-enoyl-CoA = a 4-saturated (2E)-enoyl-CoA. The enzyme catalyses a (3E)-enoyl-CoA = a 4-saturated (2E)-enoyl-CoA. It functions in the pathway lipid metabolism; fatty acid beta-oxidation. Its function is as follows. Involved in the aerobic and anaerobic degradation of long-chain fatty acids via beta-oxidation cycle. Catalyzes the formation of 3-oxoacyl-CoA from enoyl-CoA via L-3-hydroxyacyl-CoA. It can also use D-3-hydroxyacyl-CoA and cis-3-enoyl-CoA as substrate. The polypeptide is Fatty acid oxidation complex subunit alpha (Psychrobacter arcticus (strain DSM 17307 / VKM B-2377 / 273-4)).